The primary structure comprises 802 residues: Leucine--tRNA ligase (802 aa).

Residues 40-51 carry the 'HIGH' region motif; the sequence is PYPSGAGLHVGH. A 'KMSKS' region motif is present at residues 576-580; the sequence is KMSKS. An ATP-binding site is contributed by lysine 579.

The protein belongs to the class-I aminoacyl-tRNA synthetase family.

The protein resides in the cytoplasm. The catalysed reaction is tRNA(Leu) + L-leucine + ATP = L-leucyl-tRNA(Leu) + AMP + diphosphate. The chain is Leucine--tRNA ligase from Bacillus cereus (strain G9842).